We begin with the raw amino-acid sequence, 233 residues long: Purine nucleoside phosphorylase DeoD-type (233 aa).

An a purine D-ribonucleoside-binding site is contributed by H4. Residues G20, R24, R43, and 87–90 (RVGT) each bind phosphate. Residues E162, 179–181 (EME), and 203–204 (SD) each bind a purine D-ribonucleoside. The active-site Proton donor is D204.

It belongs to the PNP/UDP phosphorylase family. In terms of assembly, homohexamer; trimer of homodimers.

The catalysed reaction is a purine D-ribonucleoside + phosphate = a purine nucleobase + alpha-D-ribose 1-phosphate. It carries out the reaction a purine 2'-deoxy-D-ribonucleoside + phosphate = a purine nucleobase + 2-deoxy-alpha-D-ribose 1-phosphate. Its function is as follows. Catalyzes the reversible phosphorolytic breakdown of the N-glycosidic bond in the beta-(deoxy)ribonucleoside molecules, with the formation of the corresponding free purine bases and pentose-1-phosphate. This is Purine nucleoside phosphorylase DeoD-type from Alkaliphilus metalliredigens (strain QYMF).